The primary structure comprises 423 residues: MSERPLPLNVYFSTINSAVARSNSVLLAKNLSIPWGKTLTSVLNFDIPGTYSSDDVLKLTVERSISKNWTDIVLLHLQVLLYLVRDHDPAAAFKQQTELAQHLYREFSSGRCTGVHLPVLFIVCKDLRFLAINAHNAMLRRKQQLKVISVDESEENEQLEATARLINRAFTICINDRAPLSTSRKWGAYYIMGLLFKLYLRLDCVHLTNNVLRAMKVVELPDISLFPKSHVVIFHYYLGIVAFLNQNYKNASAELEIAFSLCHKGYNRNLELILSYWIPTRILVNHQLPTKNLLSKFPNLASVYIPLTRALKSGNLGEFGKCLQKNETLLAKTKIYLTLEGTRDLCIRNLFRKTWIICGKSTRLPVSVFQIALQVAGTDLPKLHVEAILANMISKGYMRGYISRNFETVVLSAKDPFPKNVST.

One can recognise a PCI domain in the interval V232 to P416.

This sequence belongs to the CSN12 family.

This Schizosaccharomyces pombe (strain 972 / ATCC 24843) (Fission yeast) protein is Protein CSN12 homolog (csn12).